A 249-amino-acid polypeptide reads, in one-letter code: Metal-staphylopine import system ATP-binding protein CntF (249 aa).

Positions 2–244 (IKIKDVEKSY…DNAYTRELIE (243 aa)) constitute an ABC transporter domain. 42–49 (GESGSGKS) is a binding site for ATP.

It belongs to the ABC transporter superfamily. In terms of assembly, the complex is composed of two ATP-binding proteins (CntD and CntF), two transmembrane proteins (CntB and CntC) and a solute-binding protein (CntA).

It is found in the cell membrane. Its activity is regulated as follows. Nickel/cobalt import is reduced in the presence of zinc. Part of the ABC transporter complex CntABCDF (Opp1) involved in the uptake of metal in complex with the metallophore staphylopine (StP). Involved in the import of divalent metals ions such as nickel, cobalt and zinc. Probably responsible for energy coupling to the transport system. Plays a major role in nickel/cobalt import in zinc-depleted conditions. Contributes to virulence. Required for full urease activity in vitro. The sequence is that of Metal-staphylopine import system ATP-binding protein CntF from Staphylococcus aureus (strain NCTC 8325 / PS 47).